The primary structure comprises 488 residues: Ribulose bisphosphate carboxylase large chain (488 aa).

The substrate site is built by N127 and T177. K179 serves as the catalytic Proton acceptor. A substrate-binding site is contributed by K181. Mg(2+) contacts are provided by K205, D207, and E208. Residue K205 is modified to N6-carboxylysine. The Proton acceptor role is filled by H297. The substrate site is built by R298, H330, and S382.

It belongs to the RuBisCO large chain family. Type I subfamily. As to quaternary structure, heterohexadecamer of 8 large chains and 8 small chains. Requires Mg(2+) as cofactor.

The protein localises to the plastid. It is found in the chloroplast. The catalysed reaction is 2 (2R)-3-phosphoglycerate + 2 H(+) = D-ribulose 1,5-bisphosphate + CO2 + H2O. It carries out the reaction D-ribulose 1,5-bisphosphate + O2 = 2-phosphoglycolate + (2R)-3-phosphoglycerate + 2 H(+). Functionally, ruBisCO catalyzes two reactions: the carboxylation of D-ribulose 1,5-bisphosphate, the primary event in carbon dioxide fixation, as well as the oxidative fragmentation of the pentose substrate in the photorespiration process. Both reactions occur simultaneously and in competition at the same active site. In Chrysotila carterae (Marine alga), this protein is Ribulose bisphosphate carboxylase large chain.